Consider the following 376-residue polypeptide: Alcohol dehydrogenase class-3 (376 aa).

Serine 1 bears the N-acetylserine mark. Residues cysteine 47, histidine 69, cysteine 99, cysteine 102, cysteine 105, cysteine 113, and cysteine 176 each coordinate Zn(2+).

It belongs to the zinc-containing alcohol dehydrogenase family. Class-III subfamily. As to quaternary structure, homodimer. It depends on Zn(2+) as a cofactor. As to expression, liver and gut.

It is found in the cytoplasm. The enzyme catalyses a primary alcohol + NAD(+) = an aldehyde + NADH + H(+). It carries out the reaction a secondary alcohol + NAD(+) = a ketone + NADH + H(+). The catalysed reaction is S-(hydroxymethyl)glutathione + NADP(+) = S-formylglutathione + NADPH + H(+). It catalyses the reaction S-(hydroxymethyl)glutathione + NAD(+) = S-formylglutathione + NADH + H(+). The enzyme catalyses S-nitrosoglutathione + NADH + H(+) = S-(hydroxysulfenamide)glutathione + NAD(+). Class-III ADH is remarkably ineffective in oxidizing ethanol, but it readily catalyzes the oxidation of long-chain primary alcohols and the oxidation of S-(hydroxymethyl) glutathione. Also acts as a S-nitroso-glutathione reductase by catalyzing the NADH-dependent reduction of S-nitrosoglutathione, thereby regulating protein S-nitrosylation. In Myxine glutinosa (Atlantic hagfish), this protein is Alcohol dehydrogenase class-3.